Reading from the N-terminus, the 467-residue chain is GTPase Obg (467 aa).

The Obg domain occupies 1 to 158 (MFYDEAKIFV…RWLRLELKLL (158 aa)). The 175-residue stretch at 159-333 (ADVGLVGLPN…LIRATWERLQ (175 aa)) folds into the OBG-type G domain. GTP is bound by residues 165–172 (GLPNAGKS), 190–194 (FTTLE), 214–217 (DLPG), 285–288 (NKMD), and 314–316 (SAA). Residues Ser-172 and Thr-192 each contribute to the Mg(2+) site. Positions 352–430 (TLDRSQERWE…VAGRELVWEP (79 aa)) constitute an OCT domain.

This sequence belongs to the TRAFAC class OBG-HflX-like GTPase superfamily. OBG GTPase family. In terms of assembly, monomer. Mg(2+) serves as cofactor.

It is found in the cytoplasm. Its function is as follows. An essential GTPase which binds GTP, GDP and possibly (p)ppGpp with moderate affinity, with high nucleotide exchange rates and a fairly low GTP hydrolysis rate. Plays a role in control of the cell cycle, stress response, ribosome biogenesis and in those bacteria that undergo differentiation, in morphogenesis control. The polypeptide is GTPase Obg (Thermomicrobium roseum (strain ATCC 27502 / DSM 5159 / P-2)).